A 330-amino-acid chain; its full sequence is Malate dehydrogenase (330 aa).

Residue 13–19 (GAAGQIG) coordinates NAD(+). 2 residues coordinate substrate: arginine 94 and arginine 100. NAD(+)-binding positions include asparagine 107, glutamine 114, and 131–133 (VGN). The substrate site is built by asparagine 133 and arginine 164. Residue histidine 189 is the Proton acceptor of the active site.

The protein belongs to the LDH/MDH superfamily. MDH type 2 family.

It catalyses the reaction (S)-malate + NAD(+) = oxaloacetate + NADH + H(+). Catalyzes the reversible oxidation of malate to oxaloacetate. The protein is Malate dehydrogenase of Deinococcus radiodurans (strain ATCC 13939 / DSM 20539 / JCM 16871 / CCUG 27074 / LMG 4051 / NBRC 15346 / NCIMB 9279 / VKM B-1422 / R1).